We begin with the raw amino-acid sequence, 110 residues long: uncharacterized protein (110 aa).

A helical transmembrane segment spans residues 88–108 (LTRICLLIFGIGLVVLIFLKL).

The protein localises to the membrane. This is an uncharacterized protein from Rickettsia prowazekii (strain Madrid E).